The primary structure comprises 652 residues: Iron-regulated outer membrane virulence protein (652 aa).

The N-terminal stretch at Met1–Ala25 is a signal peptide. A TonB box motif is present at residues Glu33–Ala40. Positions Val45–Arg162 constitute a TBDR plug domain. Residues Gln167–Phe652 form the TBDR beta-barrel domain. The TonB C-terminal box motif lies at Tyr635–Phe652.

It belongs to the TonB-dependent receptor family.

The protein localises to the cell outer membrane. In terms of biological role, involved in the initial step of iron uptake by binding ferric vibriobactin, an iron chelatin siderophore that allows V.cholerae to extract iron from the environment. This is Iron-regulated outer membrane virulence protein (irgA) from Vibrio cholerae serotype O1 (strain ATCC 39315 / El Tor Inaba N16961).